Here is an 878-residue protein sequence, read N- to C-terminus: Leucine--tRNA ligase (878 aa).

The 'HIGH' region signature appears at 43–53 (PYPSGRIHIGH). Residues 630 to 634 (KMSKS) carry the 'KMSKS' region motif. Lys-633 lines the ATP pocket.

Belongs to the class-I aminoacyl-tRNA synthetase family.

It localises to the cytoplasm. The enzyme catalyses tRNA(Leu) + L-leucine + ATP = L-leucyl-tRNA(Leu) + AMP + diphosphate. This Nitrobacter hamburgensis (strain DSM 10229 / NCIMB 13809 / X14) protein is Leucine--tRNA ligase.